A 550-amino-acid chain; its full sequence is Chaperonin GroEL (550 aa).

Residues 30–33 (TLGP), lysine 51, 87–91 (DGTTT), glycine 415, and aspartate 496 each bind ATP. Residues 526–550 (PEDEKMPPMPPGGGMGGMGGMGGMY) are disordered. The span at 537–550 (GGGMGGMGGMGGMY) shows a compositional bias: gly residues.

It belongs to the chaperonin (HSP60) family. Forms a cylinder of 14 subunits composed of two heptameric rings stacked back-to-back. Interacts with the co-chaperonin GroES.

The protein localises to the cytoplasm. The enzyme catalyses ATP + H2O + a folded polypeptide = ADP + phosphate + an unfolded polypeptide.. Together with its co-chaperonin GroES, plays an essential role in assisting protein folding. The GroEL-GroES system forms a nano-cage that allows encapsulation of the non-native substrate proteins and provides a physical environment optimized to promote and accelerate protein folding. The protein is Chaperonin GroEL of Chloroherpeton thalassium (strain ATCC 35110 / GB-78).